The primary structure comprises 413 residues: Multidrug resistance protein MdtM (413 aa).

Over 1-14 (MQRIIQFFSQRATT) the chain is Cytoplasmic. Residues 15–35 (LFFPMALILYDFAAYLTTDLI) form a helical membrane-spanning segment. The Periplasmic portion of the chain corresponds to 36–51 (QPGIINVVRDFNADVS). Residues 52 to 72 (LAPASVSLYLAGGMALQWLLG) traverse the membrane as a helical segment. Topologically, residues 73-81 (PLSDRIGRR) are cytoplasmic. The chain crosses the membrane as a helical span at residues 82–102 (PVLIAGALIFTLACAATLLTT). Over 103-106 (SMTQ) the chain is Periplasmic. Residues 107-127 (FLVARFVQGTSICFIATVGYV) form a helical membrane-spanning segment. The Cytoplasmic portion of the chain corresponds to 128–140 (TVQEAFGQTKAIK). Residues 141-161 (LMAIITSIVLVAPVIGPLSGA) traverse the membrane as a helical segment. The Periplasmic segment spans residues 162-170 (ALMHFVHWK). The helical transmembrane segment at 171–191 (VLFGIIAVMGLLALCGLLLAM) threads the bilayer. Topologically, residues 192–225 (PETVQRGAVPFSAVSVLRDFRNVFRNPIFLTGAA) are cytoplasmic. A helical membrane pass occupies residues 226–246 (TLSLSYIPMMSWVAVSPVILI). Over 247–254 (DAGGMSTS) the chain is Periplasmic. The helical transmembrane segment at 255 to 275 (QFAWAQVPVFGAVIVANMIVV) threads the bilayer. Residues 276–289 (RLVKDPTRPRFIWR) lie on the Cytoplasmic side of the membrane. 2 consecutive transmembrane segments (helical) span residues 290–310 (AVPIQLSGLATLLLGNLLLPH) and 311–331 (VWLWSVLGTSLYAFGIGMIFP). Over 332–351 (TLFRFTLFSNNLPKGTVSAS) the chain is Cytoplasmic. The helical transmembrane segment at 352-372 (LNMVILTVMAVSVEVGRWLWF) threads the bilayer. Residues 373–376 (HGGR) are Periplasmic-facing. The chain crosses the membrane as a helical span at residues 377–397 (LPFHLLAAVAGVIVVFTLATL). The Cytoplasmic segment spans residues 398 to 413 (LQRVRQHEAAELAAEK).

Belongs to the major facilitator superfamily.

The protein resides in the cell inner membrane. Functionally, proton-dependent efflux pump. Confers resistance to a broad spectrum of chemically unrelated substrates. This chain is Multidrug resistance protein MdtM (mdtM), found in Salmonella typhimurium (strain LT2 / SGSC1412 / ATCC 700720).